The primary structure comprises 277 residues: Bifunctional protein FolD (277 aa).

NADP(+)-binding positions include 164 to 166 (GRS), S189, and T230.

The protein belongs to the tetrahydrofolate dehydrogenase/cyclohydrolase family. As to quaternary structure, homodimer.

The enzyme catalyses (6R)-5,10-methylene-5,6,7,8-tetrahydrofolate + NADP(+) = (6R)-5,10-methenyltetrahydrofolate + NADPH. The catalysed reaction is (6R)-5,10-methenyltetrahydrofolate + H2O = (6R)-10-formyltetrahydrofolate + H(+). It participates in one-carbon metabolism; tetrahydrofolate interconversion. In terms of biological role, catalyzes the oxidation of 5,10-methylenetetrahydrofolate to 5,10-methenyltetrahydrofolate and then the hydrolysis of 5,10-methenyltetrahydrofolate to 10-formyltetrahydrofolate. This is Bifunctional protein FolD from Clostridium perfringens (strain SM101 / Type A).